The following is a 265-amino-acid chain: Glutamate racemase (265 aa).

Residues 7 to 8 (DS) and 39 to 40 (YG) contribute to the substrate site. The active-site Proton donor/acceptor is Cys70. 71 to 72 (NT) contributes to the substrate binding site. The active-site Proton donor/acceptor is the Cys182. 183–184 (TH) provides a ligand contact to substrate.

The protein belongs to the aspartate/glutamate racemases family.

It catalyses the reaction L-glutamate = D-glutamate. It functions in the pathway cell wall biogenesis; peptidoglycan biosynthesis. Functionally, provides the (R)-glutamate required for cell wall biosynthesis. This Lachnospira eligens (strain ATCC 27750 / DSM 3376 / VPI C15-48 / C15-B4) (Eubacterium eligens) protein is Glutamate racemase.